A 301-amino-acid polypeptide reads, in one-letter code: Mitochondrial substrate carrier family protein Z (301 aa).

Residues 1–19 are Mitochondrial intermembrane-facing; that stretch reads MTGKEENKQQQHVNFPWKR. Solcar repeat units lie at residues 14–101, 116–200, and 210–293; these read NFPW…FTEQ, QQFG…ISDY, and LPVW…VMGI. Residues 20 to 37 form a helical membrane-spanning segment; that stretch reads LVAGAVAGTADVWACHPL. The Mitochondrial matrix segment spans residues 38-65; that stretch reads DRIKTQLQNNPGKSIVGTFGDIVSKGKG. Residues 66 to 86 traverse the membrane as a helical segment; sequence FTGGVNALYEGILPMTAEAIF. At 87-117 the chain is on the mitochondrial intermembrane side; the sequence is KVGIRYFAFSWFTEQYKTTVYKGETLNKKQQ. A helical transmembrane segment spans residues 118–138; the sequence is FGANLLGGAFAGTIESFVVVI. At 139 to 174 the chain is on the mitochondrial matrix side; that stretch reads PCELLKVRHMTQEHNKSFGTVFRDVLREEGFQGLYK. Residues 175-191 traverse the membrane as a helical segment; sequence GGSATLLRQITNHMIRF. Residues 192 to 212 are Mitochondrial intermembrane-facing; the sequence is PTFYAISDYLKGGDHSVHLPV. Residues 213 to 229 traverse the membrane as a helical segment; it reads WQNLSAGAIAGTASTLF. At 230–275 the chain is on the mitochondrial matrix side; sequence NNPLDTIKTRMQKQGQNQTTMQVVRGIYQETGVKGYWAGVIPRILR. The chain crosses the membrane as a helical span at residues 276–296; sequence VAPGQAITWAVVELVMGILEP. Topologically, residues 297–301 are mitochondrial intermembrane; the sequence is SSKKH.

It belongs to the mitochondrial carrier (TC 2.A.29) family.

It localises to the mitochondrion inner membrane. Mitochondrial solute carriers shuttle metabolites, nucleotides, and cofactors through the mitochondrial inner membrane. The sequence is that of Mitochondrial substrate carrier family protein Z (mcfZ) from Dictyostelium discoideum (Social amoeba).